Reading from the N-terminus, the 369-residue chain is S-adenosyl-L-methionine-dependent uroporphyrinogen III methyltransferase, chloroplastic (369 aa).

The transit peptide at 1–28 (MALVQRIPISSSSIRNWQQARTNLTPIC) directs the protein to the chloroplast. S-adenosyl-L-homocysteine-binding positions include Pro124, 200 to 202 (GGD), 230 to 231 (TA), Met284, and Thr341.

The protein belongs to the precorrin methyltransferase family. As to expression, mostly expressed in leaves, and, to a lower extent, in stems, flowers and siliques.

It localises to the plastid. Its subcellular location is the chloroplast. It catalyses the reaction uroporphyrinogen III + 2 S-adenosyl-L-methionine = precorrin-2 + 2 S-adenosyl-L-homocysteine + H(+). Its pathway is porphyrin-containing compound metabolism; siroheme biosynthesis; precorrin-2 from uroporphyrinogen III: step 1/1. Its function is as follows. Essential protein required for siroheme biosynthesis. Catalyzes the two successive C-2 and C-7 methylation reactions involved in the conversion of uroporphyrinogen III to precorrin-2 via the intermediate formation of precorrin-1. It is a step in the biosynthesis of siroheme. Promotes nitrogen and sulfur assimilation as well as photosynthesis efficiency by triggering chlorophyll, nitrite reductase (NiR) and sulfite reductase (SiR) biosynthesis. The polypeptide is S-adenosyl-L-methionine-dependent uroporphyrinogen III methyltransferase, chloroplastic (Arabidopsis thaliana (Mouse-ear cress)).